A 170-amino-acid polypeptide reads, in one-letter code: Peptide deformylase (170 aa).

Residues Cys-94 and His-136 each contribute to the Fe cation site. Glu-137 is an active-site residue. His-140 is a binding site for Fe cation.

It belongs to the polypeptide deformylase family. Fe(2+) is required as a cofactor.

It carries out the reaction N-terminal N-formyl-L-methionyl-[peptide] + H2O = N-terminal L-methionyl-[peptide] + formate. Its function is as follows. Removes the formyl group from the N-terminal Met of newly synthesized proteins. Requires at least a dipeptide for an efficient rate of reaction. N-terminal L-methionine is a prerequisite for activity but the enzyme has broad specificity at other positions. The sequence is that of Peptide deformylase from Xylella fastidiosa (strain M12).